Here is a 325-residue protein sequence, read N- to C-terminus: NADH-quinone oxidoreductase subunit H (325 aa).

A run of 8 helical transmembrane segments spans residues 11 to 31 (ILISVLKAVVILLVVVTCGAF), 81 to 101 (AIFTLAPVIAFTSLLLSFAIV), 114 to 134 (IGILFFLMMAGLAVYAVLFAG), 154 to 174 (LSYEVFLGLSLMGVVAQAGSF), 186 to 206 (VWNVIPQFFGFVTFAIAGVAV), 237 to 257 (FFVGEYIGIVTVSALIVTLFF), 265 to 285 (LPPFIWFALKTAFFMVMFILI), and 304 to 324 (VCLPLTLLNLLATAAVILYNA).

The protein belongs to the complex I subunit 1 family. As to quaternary structure, NDH-1 is composed of 13 different subunits. Subunits NuoA, H, J, K, L, M, N constitute the membrane sector of the complex.

The protein resides in the cell inner membrane. The catalysed reaction is a quinone + NADH + 5 H(+)(in) = a quinol + NAD(+) + 4 H(+)(out). In terms of biological role, NDH-1 shuttles electrons from NADH, via FMN and iron-sulfur (Fe-S) centers, to quinones in the respiratory chain. The immediate electron acceptor for the enzyme in this species is believed to be ubiquinone. Couples the redox reaction to proton translocation (for every two electrons transferred, four hydrogen ions are translocated across the cytoplasmic membrane), and thus conserves the redox energy in a proton gradient. This subunit may bind ubiquinone. The polypeptide is NADH-quinone oxidoreductase subunit H (Yersinia enterocolitica serotype O:8 / biotype 1B (strain NCTC 13174 / 8081)).